The primary structure comprises 558 residues: Formate--tetrahydrofolate ligase (558 aa).

Position 67–74 (67–74) interacts with ATP; that stretch reads TPAGEGKT.

It belongs to the formate--tetrahydrofolate ligase family.

The enzyme catalyses (6S)-5,6,7,8-tetrahydrofolate + formate + ATP = (6R)-10-formyltetrahydrofolate + ADP + phosphate. The protein operates within one-carbon metabolism; tetrahydrofolate interconversion. This Ruegeria pomeroyi (strain ATCC 700808 / DSM 15171 / DSS-3) (Silicibacter pomeroyi) protein is Formate--tetrahydrofolate ligase.